Here is a 178-residue protein sequence, read N- to C-terminus: ATP-dependent protease subunit HslV (178 aa).

The active site involves Thr-7. Na(+)-binding residues include Gly-162, Cys-165, and Thr-168.

This sequence belongs to the peptidase T1B family. HslV subfamily. As to quaternary structure, a double ring-shaped homohexamer of HslV is capped on each side by a ring-shaped HslU homohexamer. The assembly of the HslU/HslV complex is dependent on binding of ATP.

Its subcellular location is the cytoplasm. The enzyme catalyses ATP-dependent cleavage of peptide bonds with broad specificity.. Allosterically activated by HslU binding. Its function is as follows. Protease subunit of a proteasome-like degradation complex believed to be a general protein degrading machinery. This Burkholderia ambifaria (strain MC40-6) protein is ATP-dependent protease subunit HslV.